A 135-amino-acid polypeptide reads, in one-letter code: Large ribosomal subunit protein eL32 (135 aa).

Belongs to the eukaryotic ribosomal protein eL32 family. Component of the large ribosomal subunit.

The protein localises to the cytoplasm. Component of the large ribosomal subunit. The ribosome is a large ribonucleoprotein complex responsible for the synthesis of proteins in the cell. This chain is Large ribosomal subunit protein eL32 (rpl32), found in Ictalurus punctatus (Channel catfish).